Here is a 495-residue protein sequence, read N- to C-terminus: Two-component response regulator-like APRR3 (495 aa).

The 119-residue stretch at 65 to 183 (KVLLVENDDS…ELKNLWQHVW (119 aa)) folds into the Response regulatory domain. Disordered regions lie at residues 188 to 441 (SSSG…RWAQ) and 465 to 495 (HSRKKLAEQRPHVKGQFIRKRDDHKSGSEDN). Over residues 206–217 (PESTQGSENDAS) the composition is skewed to polar residues. A compositionally biased stretch (low complexity) spans 231 to 248 (GLSNQDGGSDNGSGTQSS). The span at 256–265 (TKSTSPSNQF) shows a compositional bias: polar residues. The span at 284–293 (RLKEAEDQKE) shows a compositional bias: basic and acidic residues. Residues 294-304 (QIGTGSQTGMS) show a composition bias toward polar residues. Over residues 307–319 (KKAEEPGDLEKNA) the composition is skewed to basic and acidic residues. Over residues 335–350 (NRSSGNSQVESKAPSS) the composition is skewed to polar residues. The stretch at 349 to 372 (SSNREDLQSLEQTLKKTREDRDYK) forms a coiled coil. Over residues 351–378 (NREDLQSLEQTLKKTREDRDYKVGDRSV) the composition is skewed to basic and acidic residues. 2 stretches are compositionally biased toward polar residues: residues 380-395 (RHSNLSAFSKYNNGAT) and 420-436 (GSSSSSDNPLKQQSSGS). The CCT domain occupies 442-484 (REAALMKFRLKRKERCFEKKVRYHSRKKLAEQRPHVKGQFIRK). Positions 483–495 (RKRDDHKSGSEDN) are enriched in basic and acidic residues.

It belongs to the ARR-like family. In terms of assembly, interacts with APRR1/TOC1 (via N-terminus). Post-translationally, phosphorylated by WNK1; during the night. Phosphorylation is required for optimal interaction with APRR1/TOC1.

It is found in the nucleus. Its function is as follows. Controls photoperiodic flowering response. Component of the circadian clock. Controls the degradation of APRR1/TOC1 by the SCF(ZTL) complex. Expression of several members of the ARR-like family is controlled by circadian rhythm. The particular coordinated sequential expression of APRR9, APRR7, APRR5, APRR3 and APPR1 result to circadian waves that may be at the basis of the endogenous circadian clock. The polypeptide is Two-component response regulator-like APRR3 (APRR3) (Arabidopsis thaliana (Mouse-ear cress)).